A 314-amino-acid polypeptide reads, in one-letter code: D-alanine--D-alanine ligase (314 aa).

Residues 115-310 (KQVWQSVGLV…FNELVLEILA (196 aa)) form the ATP-grasp domain. An ATP-binding site is contributed by 141–196 (LDSLGGQGFVKPAHEGSSIGMSVVSTAQELKAAYEKAAHYDAKVLVERRIVGREFT). Mg(2+) is bound by residues Asp-264, Glu-277, and Asn-279.

The protein belongs to the D-alanine--D-alanine ligase family. Mg(2+) is required as a cofactor. Requires Mn(2+) as cofactor.

Its subcellular location is the cytoplasm. The catalysed reaction is 2 D-alanine + ATP = D-alanyl-D-alanine + ADP + phosphate + H(+). It functions in the pathway cell wall biogenesis; peptidoglycan biosynthesis. Its function is as follows. Cell wall formation. The protein is D-alanine--D-alanine ligase of Saccharophagus degradans (strain 2-40 / ATCC 43961 / DSM 17024).